The following is a 157-amino-acid chain: Methylamine utilization protein MauL (157 aa).

It functions in the pathway one-carbon metabolism; methylamine degradation. Probably involved in TTQ prosthetic group biosynthesis. In Methylobacillus flagellatus (strain ATCC 51484 / DSM 6875 / VKM B-1610 / KT), this protein is Methylamine utilization protein MauL (mauL).